The sequence spans 502 residues: Type II methyltransferase M.HincII (502 aa).

This sequence belongs to the N(4)/N(6)-methyltransferase family.

The catalysed reaction is a 2'-deoxyadenosine in DNA + S-adenosyl-L-methionine = an N(6)-methyl-2'-deoxyadenosine in DNA + S-adenosyl-L-homocysteine + H(+). Its function is as follows. A gamma subtype methylase that recognizes the double-stranded sequence 5'-GTYRAC-3', methylates A-5 on both strands, and protects the DNA from cleavage by the HincII endonuclease. This Haemophilus influenzae protein is Type II methyltransferase M.HincII.